We begin with the raw amino-acid sequence, 213 residues long: UPF0301 protein Aave_0907 (213 aa).

Positions 93 to 120 (MGPSSGKQAAGEGGAQAEGEGAEESAYA) are disordered.

The protein belongs to the UPF0301 (AlgH) family.

In Paracidovorax citrulli (strain AAC00-1) (Acidovorax citrulli), this protein is UPF0301 protein Aave_0907.